The sequence spans 169 residues: Phosphopantetheine adenylyltransferase (169 aa).

Residue Thr-13 coordinates substrate. ATP is bound by residues 13–14 (TF) and His-21. 3 residues coordinate substrate: Lys-45, Leu-82, and Arg-96. ATP contacts are provided by residues 97–99 (GLR), Glu-107, and 132–138 (HQFISSR).

It belongs to the bacterial CoaD family. As to quaternary structure, homohexamer. It depends on Mg(2+) as a cofactor.

The protein resides in the cytoplasm. It catalyses the reaction (R)-4'-phosphopantetheine + ATP + H(+) = 3'-dephospho-CoA + diphosphate. Its pathway is cofactor biosynthesis; coenzyme A biosynthesis; CoA from (R)-pantothenate: step 4/5. Functionally, reversibly transfers an adenylyl group from ATP to 4'-phosphopantetheine, yielding dephospho-CoA (dPCoA) and pyrophosphate. The sequence is that of Phosphopantetheine adenylyltransferase from Acidiphilium cryptum (strain JF-5).